The sequence spans 741 residues: NUT family member 2G (741 aa).

5 disordered regions span residues 172–200, 293–375, 391–424, 496–624, and 638–741; these read PGNA…PDDS, IQKS…PEEI, LGSH…SDPG, RAAP…LPGM, and RLSQ…HCSQ. The segment covering 304 to 321 has biased composition (pro residues); sequence SLPPPAPPRLEPRGPPAP. Residues 402–412 are compositionally biased toward basic and acidic residues; that stretch reads EGQREKGKVEQ. A compositionally biased stretch (polar residues) spans 528 to 545; the sequence is QRVSVETSPPQTAAQDPQ. Residues 639-650 are compositionally biased toward low complexity; the sequence is LSQSPVPSSGLL. Positions 731 to 741 are enriched in basic residues; the sequence is SRRKKKRHCSQ.

The protein belongs to the NUT family.

This chain is NUT family member 2G (NUTM2G), found in Homo sapiens (Human).